A 94-amino-acid chain; its full sequence is Cell division protein FtsB (94 aa).

Topologically, residues 1–3 (MRT) are cytoplasmic. The helical transmembrane segment at 4–21 (FAIFLLIALGWLQYTLWF) threads the bilayer. Residues 22 to 94 (GKNGMSDYAQ…YRIIDENSEG (73 aa)) are Periplasmic-facing. Residues 33–71 (SNDVALQEEVNQGLRNRNEQMFAEIDDLKKGSEAIEERA) are a coiled coil.

The protein belongs to the FtsB family. Part of a complex composed of FtsB, FtsL and FtsQ.

It is found in the cell inner membrane. Functionally, essential cell division protein. May link together the upstream cell division proteins, which are predominantly cytoplasmic, with the downstream cell division proteins, which are predominantly periplasmic. The sequence is that of Cell division protein FtsB from Aliivibrio fischeri (strain ATCC 700601 / ES114) (Vibrio fischeri).